The following is a 539-amino-acid chain: Putative dimethylaniline monooxygenase [N-oxide-forming] 6 (539 aa).

Residues 9 to 13, E32, 40 to 41, and 61 to 62 each bind FAD; these read GAGVS, LW, and NS. 195 to 198 is an NADP(+) binding site; sequence SGSD. Residues 518 to 538 form a helical membrane-spanning segment; sequence FYNLLKMLSFPLLLLAVTLTF.

This sequence belongs to the FMO family. Requires FAD as cofactor.

The protein resides in the microsome membrane. It localises to the endoplasmic reticulum membrane. It carries out the reaction N,N-dimethylaniline + NADPH + O2 + H(+) = N,N-dimethylaniline N-oxide + NADP(+) + H2O. In terms of biological role, it is probable that this protein is only produced in very small quantity or not at all as the gene coding for it seems to be unable to produce full-length transcripts. This Homo sapiens (Human) protein is Putative dimethylaniline monooxygenase [N-oxide-forming] 6 (FMO6P).